Reading from the N-terminus, the 404-residue chain is Ubiquitin-like modifier-activating enzyme 5 (404 aa).

ATP contacts are provided by glycine 83, aspartate 104, lysine 127, asparagine 150, and asparagine 184. Residues cysteine 226 and cysteine 229 each contribute to the Zn(2+) site. Cysteine 250 (glycyl thioester intermediate) is an active-site residue. Positions 303 and 308 each coordinate Zn(2+). The interval 372–404 (APEKSSETSEETVSAATADETSLEDLMAQMKSM) is disordered. Low complexity predominate over residues 382 to 391 (ETVSAATADE).

Belongs to the ubiquitin-activating E1 family. UBA5 subfamily. As to quaternary structure, interacts (via C-terminus) with Ufc1. Interacts with Ufm1.

It localises to the cytoplasm. The protein resides in the nucleus. Its subcellular location is the golgi apparatus. Functionally, E1-like enzyme which activates UFM1. The protein is Ubiquitin-like modifier-activating enzyme 5 of Drosophila melanogaster (Fruit fly).